The sequence spans 833 residues: MTFYNHKAIEPKWQAFWADNHTFKTGTDASKPKFYALDMFPYPSGAGLHVGHPEGYTATDILSRFKRAQGYNVLHPMGWDAFGLPAEQYAMDTGNDPAEFTAENIANFKRQINALGFSYDWDREINTTDPNYYKWTQWIFTKLYEKGLAYEAEVPVNWVEELGTAIANEEVLPDGTSERGGYPVVRKPMRQWMLKITAYAERLLADLEEVDWPESIKDMQRNWIGKSTGANVTFKVKDTDKDFTVFTTRPDTLFGATYAVLAPEHALVDSITTAEQAQAVAEYKRQASLKSDLARTDLAKEKTGVWTGAYAINPVNGKEMPIWIADYVLASYGTGAIMAVPAHDERDWAFAKQFNLEIIPVLEGGNVDEAAYTEDGIHINSDFLDGLDKACAIAKMVVWLEETGVGHEKVSYRLRDWLFSRQRYWGEPIPIIHWEDGTSTAVPEQDLPLVLPVTKDIRPSGTGESPLANLTDWLEVTREDGVKGRRETNTMPQWAGSSWYYLRYIDPHNDKQLADKDLLKQWLPVDIYIGGAEHAVLHLLYARFWHKVLYDLGVVPTKEPFQKLFNQGMILGTSYRDHRGALVATDKVDKRDGSFFHMETGEELEQAPAKMSKSLKNVVNPDDVVEQYGADTLRVYEMFMGPLDASIAWSEEGLEGARKFLDRVYRLITTKEIVAENSGALDKAYHETVKAVTEQIEGMKFNTAIAQLMIFVNAANKEDKLYVAYAKGFVQLLAPFAPHLGEELWQSLTASGQSISYVAWPTHDDSKLVENDVEIVVQIKGKVKAKLVVAKDLSREELEKVALAHDKIQAEIAGKEVIKVIAVPNKLVNIVVK.

Positions 41–52 (PYPSGAGLHVGH) match the 'HIGH' region motif. A 'KMSKS' region motif is present at residues 610-614 (KMSKS). Residue K613 participates in ATP binding.

This sequence belongs to the class-I aminoacyl-tRNA synthetase family.

The protein localises to the cytoplasm. The enzyme catalyses tRNA(Leu) + L-leucine + ATP = L-leucyl-tRNA(Leu) + AMP + diphosphate. This is Leucine--tRNA ligase from Streptococcus equi subsp. zooepidemicus (strain H70).